Reading from the N-terminus, the 154-residue chain is Putative thioredoxin H10 (154 aa).

Positions N24–D148 constitute a Thioredoxin domain. Active-site nucleophile residues include C74 and C77. Cysteines 74 and 77 form a disulfide.

Belongs to the thioredoxin family.

Its subcellular location is the cytoplasm. In terms of biological role, probable thiol-disulfide oxidoreductase that may be involved in the redox regulation of a number of cytosolic enzymes. This is Putative thioredoxin H10 from Arabidopsis thaliana (Mouse-ear cress).